The sequence spans 482 residues: L-propargylglycine--L-glutamate ligase (482 aa).

It catalyses the reaction L-propargylglycine + L-glutamate + ATP = L-gamma-glutamyl-L-propargylglycine + ADP + phosphate + H(+). The protein operates within amino-acid metabolism. It participates in antibiotic biosynthesis. Functionally, involved in the biosynthesis of terminal alkyne-containing amino acids such as L-beta-ethynylserine, that are produced as antibiotics by S.cattleya. Catalyzes the ATP-dependent ligation of L-propargylglycine to L-glutamate to form the dipeptide L-gamma-glutamyl-L-propargylglycine. Is selective for L-propargylglycine over norvaline, allylglycine and the standard proteinogenic amino acids, except L-cysteine which can be used as a substrate to a lesser extent. In Streptantibioticus cattleyicolor (strain ATCC 35852 / DSM 46488 / JCM 4925 / NBRC 14057 / NRRL 8057) (Streptomyces cattleya), this protein is L-propargylglycine--L-glutamate ligase.